A 288-amino-acid chain; its full sequence is Phenazine biosynthesis-like domain-containing protein 1 (288 aa).

E46 is a catalytic residue.

The protein belongs to the PhzF family.

The polypeptide is Phenazine biosynthesis-like domain-containing protein 1 (Pbld1) (Mus musculus (Mouse)).